The chain runs to 255 residues: MAVGKNKRLSRGKKGLKKKVVDPFTRKEWFDIKAPSTFENRNVGKTLVNKSTGLKNASDALKGRVVEVCLADLQGSEDHSFRKVKLRVDEVQGKNLLTNFHGMDFTTDKLRSMVRKWQTLIEANVTVKTSDDYVLRIFAIAFTRKQANQVKRHSYAQSSHIRAIRKVISEILTREVQNSTLAQLTSKLIPEVINKEIENATKDIFPLQNIHVRKVKLLKQPKFDVGALMALHGEGSGEEKGKKVSGFKDEVLETV.

Alanine 2 carries the post-translational modification N-acetylalanine; partial. Serine 245 bears the Phosphoserine mark. Lysine 248 is covalently cross-linked (Glycyl lysine isopeptide (Lys-Gly) (interchain with G-Cter in ubiquitin)). Residue threonine 254 is modified to Phosphothreonine.

This sequence belongs to the eukaryotic ribosomal protein eS1 family. In terms of assembly, component of the small ribosomal subunit. Mature ribosomes consist of a small (40S) and a large (60S) subunit. The 40S subunit contains about 33 different proteins and 1 molecule of RNA (18S). The 60S subunit contains about 49 different proteins and 3 molecules of RNA (25S, 5.8S and 5S).

It is found in the cytoplasm. In Saccharomyces cerevisiae (strain RM11-1a) (Baker's yeast), this protein is Small ribosomal subunit protein eS1B.